The sequence spans 448 residues: tRNA(Ile)-lysidine synthase (448 aa).

Residue 27 to 32 participates in ATP binding; it reads SGGVDS.

This sequence belongs to the tRNA(Ile)-lysidine synthase family.

Its subcellular location is the cytoplasm. It carries out the reaction cytidine(34) in tRNA(Ile2) + L-lysine + ATP = lysidine(34) in tRNA(Ile2) + AMP + diphosphate + H(+). Ligates lysine onto the cytidine present at position 34 of the AUA codon-specific tRNA(Ile) that contains the anticodon CAU, in an ATP-dependent manner. Cytidine is converted to lysidine, thus changing the amino acid specificity of the tRNA from methionine to isoleucine. The protein is tRNA(Ile)-lysidine synthase of Vibrio campbellii (strain ATCC BAA-1116).